Here is a 678-residue protein sequence, read N- to C-terminus: DNA ligase (678 aa).

NAD(+) contacts are provided by residues D36–D40, S85–L86, and E117. K119 functions as the N6-AMP-lysine intermediate in the catalytic mechanism. 4 residues coordinate NAD(+): R140, E177, K294, and K318. Zn(2+) is bound by residues C412, C415, C430, and C436. The BRCT domain occupies I595–V678.

This sequence belongs to the NAD-dependent DNA ligase family. LigA subfamily. Mg(2+) serves as cofactor. Requires Mn(2+) as cofactor.

The enzyme catalyses NAD(+) + (deoxyribonucleotide)n-3'-hydroxyl + 5'-phospho-(deoxyribonucleotide)m = (deoxyribonucleotide)n+m + AMP + beta-nicotinamide D-nucleotide.. Its function is as follows. DNA ligase that catalyzes the formation of phosphodiester linkages between 5'-phosphoryl and 3'-hydroxyl groups in double-stranded DNA using NAD as a coenzyme and as the energy source for the reaction. It is essential for DNA replication and repair of damaged DNA. The chain is DNA ligase from Dichelobacter nodosus (strain VCS1703A).